Here is a 353-residue protein sequence, read N- to C-terminus: MSKGTVALAMSGGVDSSVSAYILKERGYDVIGIYMDLWRDEREEYCNKSAAEDARRVAEKLDIPFHVINIEKKFKDNVIDYFIDEYLSGRTPNPCVACNRTIKFEAFFNAAKEFGADFMATGHYCKIEERNGRKVIVKAEDDKKDQTYMMYNLKQYQLERTIMPCGEYKKDYIREIAENIGLDVYNKKDSQEICFIPDNDHGGFIKRNYKSKVSEGNFVDKKGNIIGKHKGIIYYTIGQRKGLGIALGKPAYVIDINPITNEVVIGDEEDIFRTELIARDVNFIPFDKLEKSMELEAKVRYSAKPSKATIIPLENNKVKVVFQNKQRAITKGQSVVFYDKDMLVGGGIIEEIV.

Residues 9–16 and Met-35 each bind ATP; that span reads AMSGGVDS. Cys-98 serves as the catalytic Nucleophile. Cys-98 and Cys-194 are oxidised to a cystine. Gly-122 lines the ATP pocket. The tract at residues 144-146 is interaction with tRNA; sequence KDQ. Catalysis depends on Cys-194, which acts as the Cysteine persulfide intermediate. The interaction with tRNA stretch occupies residues 300–301; the sequence is RY.

Belongs to the MnmA/TRMU family.

It is found in the cytoplasm. It catalyses the reaction S-sulfanyl-L-cysteinyl-[protein] + uridine(34) in tRNA + AH2 + ATP = 2-thiouridine(34) in tRNA + L-cysteinyl-[protein] + A + AMP + diphosphate + H(+). Catalyzes the 2-thiolation of uridine at the wobble position (U34) of tRNA, leading to the formation of s(2)U34. This chain is tRNA-specific 2-thiouridylase MnmA 1, found in Clostridium botulinum (strain Okra / Type B1).